The primary structure comprises 345 residues: Protein RecA (345 aa).

Residue 65–72 coordinates ATP; it reads GPESSGKT.

This sequence belongs to the RecA family.

The protein localises to the cytoplasm. Its function is as follows. Can catalyze the hydrolysis of ATP in the presence of single-stranded DNA, the ATP-dependent uptake of single-stranded DNA by duplex DNA, and the ATP-dependent hybridization of homologous single-stranded DNAs. It interacts with LexA causing its activation and leading to its autocatalytic cleavage. This chain is Protein RecA, found in Campylobacter fetus subsp. fetus (strain 82-40).